We begin with the raw amino-acid sequence, 274 residues long: uncharacterized protein (274 aa).

This sequence belongs to the PhoU family.

This is an uncharacterized protein from Deinococcus radiodurans (strain ATCC 13939 / DSM 20539 / JCM 16871 / CCUG 27074 / LMG 4051 / NBRC 15346 / NCIMB 9279 / VKM B-1422 / R1).